The chain runs to 443 residues: MRKEEIIERYSRIFPKASRVTYAPIVAVKAKNAKVWDIEEREYIDFLSDAAVQNVGHNNEKVVKAIKEQAERLIHFTFIYGFTLEPLLLAEKLAEISPIEEPKIAFGLSGSDANDGAIKFARAYTKRRTLLSYLKSYYGSTYGASSITGLDFHVRALVGELSDVHYIPYPDCYRCPFGKERNSCKMECVEYIKAKFEGEVYADGVAALFAEPIQGDAGMVVPPEDYFKRVKRILDEHGILLAVDEVQSGLGRTGKWFAIEHFGVKPDIITVAKPLGGGLPISAVVGRAEIMDSLPPLGHAFTLIGNPVASRAALAVIEEIEEKDLLKRAEKLGSYAMKRLGKMKEEYELIGDVRGKGLMIGVDLVKDRETKERAYDEAKKVVWRAYELGLIVAFLQGNVLRIQPPLTIEKETLDEGLDKLERAIADVEEGRVGDEALKFVHGW.

Pyridoxal 5'-phosphate-binding positions include 110 to 111 and Gln-247; that span reads GS. Residue Lys-273 is modified to N6-(pyridoxal phosphate)lysine. Position 302 (Thr-302) interacts with pyridoxal 5'-phosphate.

It belongs to the class-III pyridoxal-phosphate-dependent aminotransferase family. Requires pyridoxal 5'-phosphate as cofactor.

It carries out the reaction L-leucine = D-leucine. The enzyme catalyses L-methionine = D-methionine. Activity is strongly inhibited by several metal ions, including Co(2+), Zn(2+), Ni(2+), Cu(2+) and Fe(3+), and nonsubstrate amino acids such as L-arginine and L-lysine. Activity is completely abolished in the presence of hydroxylamine, an inhibitor of pyridoxal phosphate-dependent enzymes. Its function is as follows. Amino acid racemase with moderate substrate specificity. Is primarily active toward leucine, which is the preferred substrate, and methionine. Also exhibits lower levels of activity toward phenylalanine, alanine and serine. This is Leucine/methionine racemase from Thermococcus litoralis (strain ATCC 51850 / DSM 5473 / JCM 8560 / NS-C).